The chain runs to 113 residues: Transmembrane protein 256 (113 aa).

The first 29 residues, 1–29 (MAGPAAAFRRLGALSGAAALGFASYGAHG), serve as a signal peptide directing secretion. At 30–63 (AQFPDAYGKELFDKANKHHFLHSLALLGVPHCRK) the chain is on the extracellular side. An N6-acetyllysine modification is found at Lys-43. A helical transmembrane segment spans residues 64–84 (PLWAGLLLASGTTLFCTSFYY). The Cytoplasmic portion of the chain corresponds to 85–92 (QALSGDPS). A helical membrane pass occupies residues 93-113 (IQTLAPAGGTLLLLGWLALAL).

Belongs to the TMEM256 family.

It localises to the membrane. The polypeptide is Transmembrane protein 256 (TMEM256) (Homo sapiens (Human)).